Consider the following 369-residue polypeptide: MKFVDEVTIDVTAGNGGAGCASFRREKFIPFGGPDGGNGGHGGNIFVVGDRNLNTLIDFRYIRRYTARNGEAGRGSDQFGAAGEDIVLRVPVGTIITDTETGEKIAELLVHDEKILLAKGGDGGFGNLHYKTSTNRAPRQKTPGWPGEVKNLKLELRVLADVGLLGMPNAGKSTLIAAISNARPKIADYPFTTLHPNLGVVRVGPSQSFVVADIPGLIEGASEGAGLGHRFLRHLQRTRVLLHMIDMAPFDDNVDPVAQAKAIVKELKKYDPALYEKPRWLVLNKLDMVPVEQRAALVKDFVKRMRWKGPVFEISALTREGCQGLIHAIYSHVASLQEQPEEVPDPRFTTNEDLSEAAPAPDRDDPRFR.

Residues 1–159 (MKFVDEVTID…KNLKLELRVL (159 aa)) form the Obg domain. One can recognise an OBG-type G domain in the interval 160–334 (ADVGLLGMPN…LIHAIYSHVA (175 aa)). GTP-binding positions include 166 to 173 (GMPNAGKS), 191 to 195 (FTTLH), 213 to 216 (DIPG), 284 to 287 (NKLD), and 315 to 317 (SAL). Residues serine 173 and threonine 193 each contribute to the Mg(2+) site. The disordered stretch occupies residues 339–369 (QPEEVPDPRFTTNEDLSEAAPAPDRDDPRFR).

The protein belongs to the TRAFAC class OBG-HflX-like GTPase superfamily. OBG GTPase family. In terms of assembly, monomer. Mg(2+) serves as cofactor.

It localises to the cytoplasm. In terms of biological role, an essential GTPase which binds GTP, GDP and possibly (p)ppGpp with moderate affinity, with high nucleotide exchange rates and a fairly low GTP hydrolysis rate. Plays a role in control of the cell cycle, stress response, ribosome biogenesis and in those bacteria that undergo differentiation, in morphogenesis control. This chain is GTPase Obg, found in Leptothrix cholodnii (strain ATCC 51168 / LMG 8142 / SP-6) (Leptothrix discophora (strain SP-6)).